The sequence spans 502 residues: Putative F-box/FBD/LRR-repeat protein At5g22610 (502 aa).

One can recognise an F-box domain in the interval E17 to D63. LRR repeat units lie at residues Y70–I98, Q99–F127, C147–E180, N181–K206, D208–Y228, Y238–N263, and S344–T373. Residues V384–L435 form the FBD domain.

The polypeptide is Putative F-box/FBD/LRR-repeat protein At5g22610 (Arabidopsis thaliana (Mouse-ear cress)).